The primary structure comprises 348 residues: MNMTQARVLVAAVVGLVAVLLYASIHKIEEGHLAVYYRGGALLTSPSGPGYHIMLPFITTFRSVQTTLQTDEVKNVPCGTSGGVMIYIDRIEVVNMLAPYAVFDIVRNYTADYDKTLIFNKIHHELNQFCSAHTLQEVYIELFDQIDENLKQALQKDLNLMAPGLTIQAVRVTKPKIPEAIRRNFELMEAEKTKLLIAAQKQKVVEKEAETERKKAVIEAEKIAQVAKIRFQQKVMEKETEKRISEIEDAAFLAREKAKADAEYYAAHKYATSNKHKLTPEYLELKKYQAIASNSKIYFGSNIPNMFVDSSCALKYSDIRTGRESSHPSKEALEPSGENLIQNKESTG.

At 1–7 the chain is on the cytoplasmic side; it reads MNMTQAR. A helical membrane pass occupies residues 8 to 28; that stretch reads VLVAAVVGLVAVLLYASIHKI. At 29-348 the chain is on the lumenal side; that stretch reads EEGHLAVYYR…NLIQNKESTG (320 aa). N108 carries N-linked (GlcNAc...) asparagine glycosylation. An N6-acetyllysine modification is found at K269. Basic and acidic residues predominate over residues 321 to 333; that stretch reads TGRESSHPSKEAL. Residues 321–348 are disordered; it reads TGRESSHPSKEALEPSGENLIQNKESTG. The span at 339 to 348 shows a compositional bias: polar residues; that stretch reads NLIQNKESTG.

It belongs to the band 7/mec-2 family. Forms a heteromeric complex with ERLIN2. In complex with ERLIN2, interacts with RNF170. Interacts with AMFR and SYVN1. In terms of processing, deubiquitinated by USP25; leading to stabilization.

It is found in the endoplasmic reticulum membrane. In terms of biological role, component of the ERLIN1/ERLIN2 complex which mediates the endoplasmic reticulum-associated degradation (ERAD) of inositol 1,4,5-trisphosphate receptors (IP3Rs). Involved in regulation of cellular cholesterol homeostasis by regulation the SREBP signaling pathway. Binds cholesterol and may promote ER retention of the SCAP-SREBF complex. The sequence is that of Erlin-1 from Pongo abelii (Sumatran orangutan).